We begin with the raw amino-acid sequence, 476 residues long: Cysteine--tRNA ligase (476 aa).

Position 30 (cysteine 30) interacts with Zn(2+). The short motif at 32-42 is the 'HIGH' region element; it reads PTVYNYIHIGN. 3 residues coordinate Zn(2+): cysteine 215, histidine 240, and glutamate 244. The 'KMSKS' region motif lies at 274 to 278; sequence KMSKS. Lysine 277 lines the ATP pocket.

Belongs to the class-I aminoacyl-tRNA synthetase family. Monomer. It depends on Zn(2+) as a cofactor.

Its subcellular location is the cytoplasm. It catalyses the reaction tRNA(Cys) + L-cysteine + ATP = L-cysteinyl-tRNA(Cys) + AMP + diphosphate. This is Cysteine--tRNA ligase from Lactobacillus helveticus (strain DPC 4571).